Here is a 251-residue protein sequence, read N- to C-terminus: Large ribosomal subunit protein uL16m (251 aa).

Residues 1–29 (MWRLLTRAPAPLWRMHFSDTWAALPTSAG) constitute a mitochondrion transit peptide.

It belongs to the universal ribosomal protein uL16 family. In terms of assembly, component of the mitochondrial ribosome large subunit (39S) which comprises a 16S rRNA and about 50 distinct proteins.

Its subcellular location is the mitochondrion. The polypeptide is Large ribosomal subunit protein uL16m (Mrpl16) (Rattus norvegicus (Rat)).